Reading from the N-terminus, the 278-residue chain is Phosphatidylglycerol--prolipoprotein diacylglyceryl transferase (278 aa).

Helical transmembrane passes span 17-37, 57-77, 89-109, and 119-139; these read LAVR…ILLG, ALFY…VLFY, ILAI…VAIA, and LSWL…LGAG. A 1,2-diacyl-sn-glycero-3-phospho-(1'-sn-glycerol) is bound at residue Arg140. 3 helical membrane passes run 174 to 194, 200 to 220, and 233 to 253; these read QLYE…LYSA, GAVT…CEFF, and LGIS…IALL.

This sequence belongs to the Lgt family.

It localises to the cell inner membrane. The enzyme catalyses L-cysteinyl-[prolipoprotein] + a 1,2-diacyl-sn-glycero-3-phospho-(1'-sn-glycerol) = an S-1,2-diacyl-sn-glyceryl-L-cysteinyl-[prolipoprotein] + sn-glycerol 1-phosphate + H(+). It participates in protein modification; lipoprotein biosynthesis (diacylglyceryl transfer). Catalyzes the transfer of the diacylglyceryl group from phosphatidylglycerol to the sulfhydryl group of the N-terminal cysteine of a prolipoprotein, the first step in the formation of mature lipoproteins. This is Phosphatidylglycerol--prolipoprotein diacylglyceryl transferase from Nitrosomonas europaea (strain ATCC 19718 / CIP 103999 / KCTC 2705 / NBRC 14298).